Here is a 144-residue protein sequence, read N- to C-terminus: Large ribosomal subunit protein uL11 (144 aa).

It belongs to the universal ribosomal protein uL11 family. As to quaternary structure, part of the ribosomal stalk of the 50S ribosomal subunit. Interacts with L10 and the large rRNA to form the base of the stalk. L10 forms an elongated spine to which L12 dimers bind in a sequential fashion forming a multimeric L10(L12)X complex. Post-translationally, one or more lysine residues are methylated.

In terms of biological role, forms part of the ribosomal stalk which helps the ribosome interact with GTP-bound translation factors. The protein is Large ribosomal subunit protein uL11 of Streptomyces griseus subsp. griseus (strain JCM 4626 / CBS 651.72 / NBRC 13350 / KCC S-0626 / ISP 5235).